Consider the following 177-residue polypeptide: Parathyroid hormone-related protein (177 aa).

The N-terminal stretch at 1–24 (MLWRLVQQWSVAVFLLSYSVPSCG) is a signal peptide. A propeptide spanning residues 25-34 (RSVEELGRRL) is cleaved from the precursor. Positions 57 to 68 (RFFLHHLIAEIH) are important for receptor binding. The interval 74-149 (ATSEVSPNSK…KRRTRSAWLT (76 aa)) is disordered. Polar residues predominate over residues 76 to 90 (SEVSPNSKPAPNTKN). Positions 108 to 129 (TNKVETYKEQPLKTPGKKKKSK) match the Nuclear localization signal motif. A compositionally biased stretch (basic and acidic residues) spans 109–118 (NKVETYKEQP). Over residues 122 to 132 (PGKKKKSKPGK) the composition is skewed to basic residues.

The protein belongs to the parathyroid hormone family. In terms of assembly, PTHrP interacts with PTH1R (via N-terminal extracellular domain). In terms of processing, there are several secretory forms, including osteostatin, arising from endoproteolytic cleavage of the initial translation product. Each of these secretory forms is believed to have one or more of its own receptors that mediates the normal paracrine, autocrine and endocrine actions.

The protein localises to the secreted. It localises to the cytoplasm. It is found in the nucleus. In terms of biological role, neuroendocrine peptide which is a critical regulator of cellular and organ growth, development, migration, differentiation and survival and of epithelial calcium ion transport. Acts by binding to its receptor, PTH1R, activating G protein-coupled receptor signaling. Regulates endochondral bone development and epithelial-mesenchymal interactions during the formation of the mammary glands and teeth. Required for skeletal homeostasis. Promotes mammary mesenchyme differentiation and bud outgrowth by modulating mesenchymal cell responsiveness to BMPs. Up-regulates BMPR1A expression in the mammary mesenchyme and this increases the sensitivity of these cells to BMPs and allows them to respond to BMP4 in a paracrine and/or autocrine fashion. BMP4 signaling in the mesenchyme, in turn, triggers epithelial outgrowth and augments MSX2 expression, which causes the mammary mesenchyme to inhibit hair follicle formation within the nipple sheath. Functionally, potent inhibitor of osteoclastic bone resorption. The polypeptide is Parathyroid hormone-related protein (PTHLH) (Bos taurus (Bovine)).